Reading from the N-terminus, the 311-residue chain is Homoserine kinase (311 aa).

89–99 lines the ATP pocket; sequence PFARGLGSSAT.

It belongs to the GHMP kinase family. Homoserine kinase subfamily.

Its subcellular location is the cytoplasm. The catalysed reaction is L-homoserine + ATP = O-phospho-L-homoserine + ADP + H(+). It functions in the pathway amino-acid biosynthesis; L-threonine biosynthesis; L-threonine from L-aspartate: step 4/5. Its function is as follows. Catalyzes the ATP-dependent phosphorylation of L-homoserine to L-homoserine phosphate. This is Homoserine kinase from Halothermothrix orenii (strain H 168 / OCM 544 / DSM 9562).